A 549-amino-acid polypeptide reads, in one-letter code: Cation/acetate symporter ActP (549 aa).

13 consecutive transmembrane segments (helical) span residues 33–53, 77–97, 103–123, 148–168, 183–203, 206–226, 262–282, 303–323, 355–375, 404–424, 428–448, 464–484, and 493–513; these read WQAI…TYWA, LAIA…ALVF, GLIY…LIAE, ILSA…QMVG, IAVV…GMLA, WVQI…AFMV, ISAL…PHIL, GFMG…IMLV, LFLG…VAGL, VSKI…VLFE, IAFM…PIIL, GGWL…TIWV, and IFPY…GIWF.

Belongs to the sodium:solute symporter (SSF) (TC 2.A.21) family.

It is found in the cell inner membrane. Its function is as follows. Transports acetate. The polypeptide is Cation/acetate symporter ActP (Salmonella agona (strain SL483)).